Consider the following 37-residue polypeptide: Large ribosomal subunit protein bL36 (37 aa).

Belongs to the bacterial ribosomal protein bL36 family.

This is Large ribosomal subunit protein bL36 from Photobacterium profundum (strain SS9).